The primary structure comprises 421 residues: Putative nickel insertion protein (421 aa).

The protein belongs to the LarC family.

The sequence is that of Putative nickel insertion protein from Gloeobacter violaceus (strain ATCC 29082 / PCC 7421).